The sequence spans 225 residues: Ribonuclease 3 (225 aa).

Residues 5 to 127 (VTELYKTIDY…IIGAVFLDSD (123 aa)) form the RNase III domain. Glu40 is a Mg(2+) binding site. Asp44 is an active-site residue. The Mg(2+) site is built by Asp113 and Glu116. Glu116 is a catalytic residue. In terms of domain architecture, DRBM spans 154 to 223 (DPKTLLQEHL…AEKALKILKN (70 aa)).

Belongs to the ribonuclease III family. In terms of assembly, homodimer. Requires Mg(2+) as cofactor.

It localises to the cytoplasm. The enzyme catalyses Endonucleolytic cleavage to 5'-phosphomonoester.. Its function is as follows. Digests double-stranded RNA. Involved in the processing of primary rRNA transcript to yield the immediate precursors to the large and small rRNAs (23S and 16S). Processes some mRNAs, and tRNAs when they are encoded in the rRNA operon. Processes pre-crRNA and tracrRNA of type II CRISPR loci if present in the organism. This Pseudoalteromonas translucida (strain TAC 125) protein is Ribonuclease 3.